The primary structure comprises 100 residues: Large ribosomal subunit protein uL23 (100 aa).

Belongs to the universal ribosomal protein uL23 family. In terms of assembly, part of the 50S ribosomal subunit. Contacts protein L29, and trigger factor when it is bound to the ribosome.

In terms of biological role, one of the early assembly proteins it binds 23S rRNA. One of the proteins that surrounds the polypeptide exit tunnel on the outside of the ribosome. Forms the main docking site for trigger factor binding to the ribosome. The polypeptide is Large ribosomal subunit protein uL23 (Edwardsiella ictaluri (strain 93-146)).